A 713-amino-acid polypeptide reads, in one-letter code: P-loop NTPase domain-containing protein LPA1 homolog (713 aa).

Disordered regions lie at residues Ala-218–Lys-249, Thr-504–Ser-575, and Leu-650–Lys-713. Basic and acidic residues predominate over residues Asp-231–Pro-246. Residues Thr-504–Ser-531 show a composition bias toward polar residues. The span at Lys-533–Glu-544 shows a compositional bias: basic and acidic residues. Acidic residues predominate over residues Ser-551 to Ala-562. The segment covering Ala-656–Ser-668 has biased composition (low complexity).

Functionally, required for the accumulation of phytic acid in seeds. Phytic acid is the primary storage form of phosphorus in cereal grains and other plant seeds. In Oryza sativa subsp. japonica (Rice), this protein is P-loop NTPase domain-containing protein LPA1 homolog.